The chain runs to 422 residues: Validoxylamine A glucosyltransferase (422 aa).

The protein belongs to the glycosyltransferase 2 family. Mn(2+) serves as cofactor.

It catalyses the reaction validoxylamine A + UDP-alpha-D-glucose = validamycin A + UDP + H(+). Involved in the biosynthesis of the antifungal agent validamycin A. Catalyzes the final attachment of glucose from UDP-alpha-D-glucose to validoxylamine A to yield validamycin A. UDP-glucose is the most efficient glycosyl donor, whereas GDP-glucose and ADP-glucose are much less efficient. ValG also utilizes UDP-galactose as substrate to produce the new validamycin analog, 4''-epi-validamycin A. The sequence is that of Validoxylamine A glucosyltransferase from Streptomyces hygroscopicus subsp. jinggangensis (strain 5008).